A 599-amino-acid chain; its full sequence is Nucleosomal histone kinase 1 (599 aa).

The Protein kinase domain occupies 47–328; that stretch reads WRIGPSIGVG…PDYDKCRSWF (282 aa). ATP is bound by residues 53 to 61 and K77; that span reads IGVGGFGEI. Residue D183 is the Proton acceptor of the active site. 2 disordered regions span residues 340-507 and 532-599; these read NGDL…PQPR and RKKK…KYQG. Polar residues predominate over residues 349-361; sequence PQTSSNNNLSPPG. A phosphoserine mark is found at S376, S381, S382, S388, and S390. The segment covering 435 to 448 has biased composition (basic and acidic residues); sequence VKTEPKSTPRERAT. S483 carries the post-translational modification Phosphoserine. The segment covering 546 to 558 has biased composition (low complexity); that stretch reads SRTPSSRSALASS. A phosphoserine mark is found at S564 and S586. A Phosphothreonine modification is found at T589.

This sequence belongs to the protein kinase superfamily. CK1 Ser/Thr protein kinase family. VRK subfamily. May interact with Unc-89 (via protein kinase domain 1). Interacts with L(2)gl. The cofactor is Mg(2+). In terms of processing, phosphorylated during mitosis and female meiosis. In terms of tissue distribution, expressed in ovaries (at protein level). Expressed in indirect flight muscle (IFM) (at protein level).

It localises to the cytoplasm. The protein resides in the nucleus. The protein localises to the chromosome. It is found in the myofibril. Its subcellular location is the sarcomere. It localises to the z line. The protein resides in the m line. It catalyses the reaction L-seryl-[protein] + ATP = O-phospho-L-seryl-[protein] + ADP + H(+). The enzyme catalyses L-threonyl-[protein] + ATP = O-phospho-L-threonyl-[protein] + ADP + H(+). Its function is as follows. Serine/threonine-protein kinase involved in somatic mitosis and female meiosis. Required for spindle organization in mitosis, and for the establishment or maintenance of meiosis-specific chromosomal configurations, including the prophase I karyosome and the metaphase I spindle. Specifically phosphorylates nucleosomal H2A on 'Thr-119'. Required for the development and organization of indirect flight muscle sarcomeres by regulating the formation of M line and H zone and the correct assembly of thick and thin filaments in the sarcomere. This Drosophila melanogaster (Fruit fly) protein is Nucleosomal histone kinase 1 (ball).